The sequence spans 290 residues: Iron-sulfur cluster carrier protein (290 aa).

47–54 (GKGGVGKS) is an ATP binding site.

It belongs to the Mrp/NBP35 ATP-binding proteins family. As to quaternary structure, homodimer.

Its function is as follows. Binds and transfers iron-sulfur (Fe-S) clusters to target apoproteins. Can hydrolyze ATP. This Methanocaldococcus jannaschii (strain ATCC 43067 / DSM 2661 / JAL-1 / JCM 10045 / NBRC 100440) (Methanococcus jannaschii) protein is Iron-sulfur cluster carrier protein.